A 180-amino-acid polypeptide reads, in one-letter code: MNTLQKGFTLIELMIVIAIVGILAAVALPAYQDYTARAQVSEAILLAEGQKSAVTEYYLNHGKWPENNTSAGVASPPSDIKGKYVKEVKVENGVVTATMNSSGVNKEIQGKRLSLWGRRENGSVKWFCGQPVTRAKADADADAAGKDTTNIDTKHLPSTCRDAASAVCIETPPTAFYKNT.

Residues 1–7 (MNTLQKG) constitute a propeptide that is removed on maturation. N-methylphenylalanine is present on F8. A helical membrane pass occupies residues 8–28 (FTLIELMIVIAIVGILAAVAL). O-linked (GlcNAc...) serine glycosylation occurs at S70. A disulfide bridge links C128 with C160.

The protein belongs to the N-Me-Phe pilin family. As to quaternary structure, the pili are polar flexible filaments of about 5.4 nanometers diameter and 2.5 micrometers average length; they consist of only a single polypeptide chain arranged in a helical configuration of five subunits per turn in the assembled pilus.

Its subcellular location is the fimbrium. The protein resides in the membrane. Its function is as follows. Major component of the type IV pilus (T4P) that plays a role in cellular adherence, microcolony formation, resistance to neutrophil mediated killing, twitching motility as well as transformation. Mediates the attachment and the formation of bacterial microcolonies on host epithelial cells. Mechanistically, pili retractation induces host NF-kappa-B activation in infected cells, which is temporally associated with the formation of gonococcal microcolonies. In Neisseria gonorrhoeae, this protein is Type IV major pilin protein PilE1 (pilE1).